A 286-amino-acid polypeptide reads, in one-letter code: Carbohydrate-binding domain-containing protein Cthe_2159 (286 aa).

A signal peptide spans 1-20 (MSIKKLILAASILTTLALTG). A lipid anchor (N-palmitoyl cysteine) is attached at cysteine 21. Cysteine 21 is lipidated: S-diacylglycerol cysteine. The interval 124-225 (GKDNVLTDAE…GIKVENTEEP (102 aa)) is polygalacturonic acid-binding. Ca(2+)-binding residues include arginine 152, aspartate 153, aspartate 154, asparagine 177, aspartate 178, aspartate 215, aspartate 243, aspartate 244, and aspartate 247.

Monomer.

It localises to the cell membrane. Its function is as follows. Binds cellulosic and pectic substrates. Displays no enzyme activity (in vitro). The protein is Carbohydrate-binding domain-containing protein Cthe_2159 of Acetivibrio thermocellus (strain ATCC 27405 / DSM 1237 / JCM 9322 / NBRC 103400 / NCIMB 10682 / NRRL B-4536 / VPI 7372) (Clostridium thermocellum).